Consider the following 131-residue polypeptide: Large ribosomal subunit protein bL19 (131 aa).

Basic and acidic residues predominate over residues 111-124 (RIAERAERGSEKGK). A disordered region spans residues 111–131 (RIAERAERGSEKGKTTPAAAE).

It belongs to the bacterial ribosomal protein bL19 family.

This protein is located at the 30S-50S ribosomal subunit interface and may play a role in the structure and function of the aminoacyl-tRNA binding site. This Methylobacterium nodulans (strain LMG 21967 / CNCM I-2342 / ORS 2060) protein is Large ribosomal subunit protein bL19.